The sequence spans 103 residues: N(4)-acetylcytidine amidohydrolase (103 aa).

Residues 6 to 101 form the ASCH domain; sequence ITFFQRFQDD…QIQFYVIEFK (96 aa). Residue Lys-21 is the Proton acceptor of the active site. Catalysis depends on Thr-24, which acts as the Nucleophile. Glu-74 functions as the Proton donor in the catalytic mechanism.

The protein belongs to the N(4)-acetylcytidine amidohydrolase family.

It catalyses the reaction N(4)-acetylcytidine + H2O = cytidine + acetate + H(+). The enzyme catalyses N(4)-acetyl-2'-deoxycytidine + H2O = 2'-deoxycytidine + acetate + H(+). It carries out the reaction N(4)-acetylcytosine + H2O = cytosine + acetate + H(+). Catalyzes the hydrolysis of N(4)-acetylcytidine (ac4C). This chain is N(4)-acetylcytidine amidohydrolase (yqfB), found in Escherichia coli (strain SMS-3-5 / SECEC).